A 671-amino-acid polypeptide reads, in one-letter code: K(+)-insensitive pyrophosphate-energized proton pump (671 aa).

5 helical membrane passes run 3–23, 57–77, 79–99, 128–148, and 156–176; these read SLIF…AFFA, TIAV…DDGL, IAIG…IGMS, AVTG…FYIL, and VGFG…GGIF. Lysine 178 is a substrate binding site. Mg(2+)-binding residues include aspartate 181, aspartate 185, asparagine 208, and aspartate 211. Helical transmembrane passes span 223-243, 249-269, 285-305, 310-330, 366-386, and 391-411; these read LFET…LIIG, ILYP…SVFF, GVGG…NSLM, LFYA…ITEY, LVPT…VGGA, and IGLY…GMIV. Aspartate 421 lines the Mg(2+) pocket. 4 consecutive transmembrane segments (helical) span residues 452–472, 490–510, 558–578, and 580–600; these read AVTK…LFAD, VVLA…AVTM, MAMP…ILGP, and ALAG…LMMD. 3 residues coordinate Ca(2+): aspartate 607, aspartate 633, and aspartate 637. Lysine 640 is a binding site for substrate. Residues 646–666 form a helical membrane-spanning segment; sequence ALNALIKVVNMVAILFSSLII.

Belongs to the H(+)-translocating pyrophosphatase (TC 3.A.10) family. K(+)-insensitive subfamily. Homodimer. Requires Mg(2+) as cofactor.

It is found in the cell membrane. It carries out the reaction diphosphate + H2O + H(+)(in) = 2 phosphate + 2 H(+)(out). Functionally, proton pump that utilizes the energy of pyrophosphate hydrolysis as the driving force for proton movement across the membrane. Generates a proton motive force. The protein is K(+)-insensitive pyrophosphate-energized proton pump of Methanosarcina acetivorans (strain ATCC 35395 / DSM 2834 / JCM 12185 / C2A).